Reading from the N-terminus, the 358-residue chain is Methylthioribose-1-phosphate isomerase (358 aa).

Residues 54–56 (RGA), R96, and Q205 contribute to the substrate site. D246 acts as the Proton donor in catalysis. 256 to 257 (NK) is a binding site for substrate.

Belongs to the eIF-2B alpha/beta/delta subunits family. MtnA subfamily.

It catalyses the reaction 5-(methylsulfanyl)-alpha-D-ribose 1-phosphate = 5-(methylsulfanyl)-D-ribulose 1-phosphate. It functions in the pathway amino-acid biosynthesis; L-methionine biosynthesis via salvage pathway; L-methionine from S-methyl-5-thio-alpha-D-ribose 1-phosphate: step 1/6. Catalyzes the interconversion of methylthioribose-1-phosphate (MTR-1-P) into methylthioribulose-1-phosphate (MTRu-1-P). This chain is Methylthioribose-1-phosphate isomerase, found in Pseudomonas savastanoi pv. phaseolicola (strain 1448A / Race 6) (Pseudomonas syringae pv. phaseolicola (strain 1448A / Race 6)).